The sequence spans 323 residues: D-alanine--D-alanine ligase (323 aa).

In terms of domain architecture, ATP-grasp spans 105-305 (KQQLVPRGIP…YEDLVEAIVE (201 aa)). 131 to 188 (PLARPYVLKPVNEGSSVGVAIVTDESNYGNPIRRDAPGPWQEFRELLAEPFIRGRELT) serves as a coordination point for ATP. Mg(2+)-binding residues include Asp256, Glu272, and Asn274.

The protein belongs to the D-alanine--D-alanine ligase family. Mg(2+) is required as a cofactor. The cofactor is Mn(2+).

It localises to the cytoplasm. It catalyses the reaction 2 D-alanine + ATP = D-alanyl-D-alanine + ADP + phosphate + H(+). The protein operates within cell wall biogenesis; peptidoglycan biosynthesis. Cell wall formation. The chain is D-alanine--D-alanine ligase from Erythrobacter litoralis (strain HTCC2594).